Consider the following 270-residue polypeptide: Chymotrypsin-like elastase family member 3B (270 aa).

The or 16 signal peptide spans 1–15 (MMLRLLSSLLLVAVA). A propeptide spans 16–28 (SGYGPPSSRPSSR) (activation peptide). The 240-residue stretch at 29–268 (VVNGEDAVPY…FIDWIEETIA (240 aa)) folds into the Peptidase S1 domain. A disulfide bond links Cys-58 and Cys-74. The active-site Charge relay system is His-73. The N-linked (GlcNAc...) asparagine glycan is linked to Asn-114. A disulfide bridge connects residues Cys-117 and Cys-120. The active-site Charge relay system is Asp-123. 3 disulfides stabilise this stretch: Cys-157–Cys-223, Cys-188–Cys-204, and Cys-213–Cys-244. The active-site Charge relay system is Ser-217.

This sequence belongs to the peptidase S1 family. Elastase subfamily. Pancreas. Not detectable in keratinocytes.

The catalysed reaction is Preferential cleavage: Ala-|-Xaa. Does not hydrolyze elastin.. Efficient protease with alanine specificity but only little elastolytic activity. The sequence is that of Chymotrypsin-like elastase family member 3B (CELA3B) from Homo sapiens (Human).